A 513-amino-acid chain; its full sequence is Glutamate--tRNA ligase 2 (513 aa).

The 'HIGH' region motif lies at 11-21 (PSPTGFLHIGS). Positions 240–244 (KLSKR) match the 'KMSKS' region motif. Lysine 243 lines the ATP pocket. The RPE1 insert domain maps to 335-383 (NTLLRHLPYREEFGGNTERSTAAYIDIREDASTGLTYKLPLAVELPKKF).

This sequence belongs to the class-I aminoacyl-tRNA synthetase family. Glutamate--tRNA ligase type 1 subfamily. As to quaternary structure, monomer.

The protein localises to the cytoplasm. The catalysed reaction is tRNA(Glu) + L-glutamate + ATP = L-glutamyl-tRNA(Glu) + AMP + diphosphate. Catalyzes the attachment of glutamate to tRNA(Glu) in a two-step reaction: glutamate is first activated by ATP to form Glu-AMP and then transferred to the acceptor end of tRNA(Glu). This chain is Glutamate--tRNA ligase 2, found in Rickettsia conorii (strain ATCC VR-613 / Malish 7).